A 1254-amino-acid polypeptide reads, in one-letter code: Protein transport protein Sec31A (1254 aa).

7 WD repeats span residues 4-47 (KEIN…EIFE), 64-111 (SSPH…AGDS), 120-160 (KHTG…SPMT), 166-206 (QPQE…LIIK), 209-254 (DHSN…SPLK), 258-298 (NHTR…VLYE), and 301-341 (TSTQ…NDNA). The segment covering 364–383 (TLPPLQLPQQTSPQSTITPL) has biased composition (low complexity). Positions 364 to 386 (TLPPLQLPQQTSPQSTITPLKKP) are disordered. A WD 8; interaction with SEC13 repeat occupies 397-428 (SFAFGGKLVTLDNIKPTAQQPQQTAAHVVHIS). Disordered stretches follow at residues 818-892 (PMQT…QSPA), 983-1008 (CFQH…GTQH), and 1058-1125 (PPAP…PGAP). The span at 832-846 (AQPAAPAVPPQYYQQ) shows a compositional bias: low complexity. 2 stretches are compositionally biased toward polar residues: residues 847-863 (GRSA…TPTA) and 872-881 (VPSSDPQGDS). Low complexity predominate over residues 1080–1091 (QTLQPQQQVPDQ).

The protein belongs to the WD repeat SEC31 family. COPII is composed of at least 5 proteins: the SEC23/24 complex, the SEC13/31 complex and SAR1. SEC13 and SEC31 make a 2:2 tetramer that forms the edge element of the COPII outer coat. The tetramer self-assembles in multiple copies to form the complete polyhedral cage. Interacts (via WD 8) with SEC13.

It is found in the cytoplasm. The protein localises to the cytoplasmic vesicle. The protein resides in the COPII-coated vesicle membrane. Its subcellular location is the endoplasmic reticulum membrane. Component of the coat protein complex II (COPII) which promotes the formation of transport vesicles from the endoplasmic reticulum (ER). The coat has two main functions, the physical deformation of the endoplasmic reticulum membrane into vesicles and the selection of cargo molecules. This is Protein transport protein Sec31A (sec31a) from Danio rerio (Zebrafish).